The sequence spans 156 residues: ATP synthase subunit b (156 aa).

The chain crosses the membrane as a helical span at residues 7–27; the sequence is LFVQAIVFLILVLFTMKFVWP.

Belongs to the ATPase B chain family. F-type ATPases have 2 components, F(1) - the catalytic core - and F(0) - the membrane proton channel. F(1) has five subunits: alpha(3), beta(3), gamma(1), delta(1), epsilon(1). F(0) has three main subunits: a(1), b(2) and c(10-14). The alpha and beta chains form an alternating ring which encloses part of the gamma chain. F(1) is attached to F(0) by a central stalk formed by the gamma and epsilon chains, while a peripheral stalk is formed by the delta and b chains.

The protein localises to the cell inner membrane. In terms of biological role, f(1)F(0) ATP synthase produces ATP from ADP in the presence of a proton or sodium gradient. F-type ATPases consist of two structural domains, F(1) containing the extramembraneous catalytic core and F(0) containing the membrane proton channel, linked together by a central stalk and a peripheral stalk. During catalysis, ATP synthesis in the catalytic domain of F(1) is coupled via a rotary mechanism of the central stalk subunits to proton translocation. Functionally, component of the F(0) channel, it forms part of the peripheral stalk, linking F(1) to F(0). This is ATP synthase subunit b from Acidovorax sp. (strain JS42).